A 118-amino-acid chain; its full sequence is Large ribosomal subunit protein bL20 (118 aa).

Belongs to the bacterial ribosomal protein bL20 family.

Functionally, binds directly to 23S ribosomal RNA and is necessary for the in vitro assembly process of the 50S ribosomal subunit. It is not involved in the protein synthesizing functions of that subunit. The chain is Large ribosomal subunit protein bL20 from Photorhabdus laumondii subsp. laumondii (strain DSM 15139 / CIP 105565 / TT01) (Photorhabdus luminescens subsp. laumondii).